The following is a 116-amino-acid chain: Omega-ctenitoxin-Pn3a (116 aa).

The signal sequence occupies residues 1–19; that stretch reads MKMKLLGIILLVSFPFVLG. Residues 20 to 38 constitute a propeptide that is removed on maturation; the sequence is FAGIPIEEGENSVEVGEVE. Intrachain disulfides connect Cys-41-Cys-58, Cys-48-Cys-64, Cys-55-Cys-90, Cys-57-Cys-78, Cys-66-Cys-76, Cys-96-Cys-102, and Cys-106-Cys-111. The residue at position 115 (His-115) is a Histidine amide.

It belongs to the neurotoxin 04 (omega-agtx) family. 03 (type II/III omega-agtx) subfamily. Expressed by the venom gland.

The protein localises to the secreted. Functionally, this toxin is a potent and practically irreversible antagonist of both Cav2.1/CACNA1A and Cav2.2/CACNA1B calcium channels, while it displays a partial and rapidly reversible block of Cav2.3/CACNA1E calcium channels and no effect on Cav3/CACNA1 calcium channels. Inhibits glutamate uptake from rat brain synaptosomes by an interaction between cysteines from both glutamate transporter and toxin. Blocks potassium-induced exocytosis of synaptic vesicles in brain cortical synaptosomes (IC(50)=1.1 nM). In rat brain, inhibits glutamate release, neuronal death and loss of neurotransmission in the hippocampus resulting from ischemia. In vivo, induces rapid general flaccid paralysis followed by death in 10-30 minutes at dose levels of 5 ug per mouse. This is Omega-ctenitoxin-Pn3a from Phoneutria nigriventer (Brazilian armed spider).